We begin with the raw amino-acid sequence, 186 residues long: Adrenodoxin, mitochondrial (186 aa).

The transit peptide at 1–58 (MAVRLLRVASAALGDTAVRWQPLVGPRAGNRGPGGSIWLGLGGRAAAARTLSLSARAW) directs the protein to the mitochondrion. Residue S61 is modified to Phosphoserine. K64 bears the N6-acetyllysine; alternate mark. An N6-succinyllysine; alternate modification is found at K64. The region spanning 65–169 (ITVHFINRDG…NMTVRVPEAV (105 aa)) is the 2Fe-2S ferredoxin-type domain. Residues C104, C110, C113, and C150 each coordinate [2Fe-2S] cluster. K156 bears the N6-succinyllysine mark. S175 carries the phosphoserine modification.

It belongs to the adrenodoxin/putidaredoxin family. Interacts with CYP11A1. It depends on [2Fe-2S] cluster as a cofactor.

It is found in the mitochondrion matrix. Essential for the synthesis of various steroid hormones. Participates in the reduction of mitochondrial cytochrome P450 for steroidogenesis. Transfers electrons from adrenodoxin reductase to CYP11A1, a cytochrome P450 that catalyzes cholesterol side-chain cleavage. Does not form a ternary complex with adrenodoxin reductase and CYP11A1 but shuttles between the two enzymes to transfer electrons. In Sus scrofa (Pig), this protein is Adrenodoxin, mitochondrial (FDX1).